Here is a 551-residue protein sequence, read N- to C-terminus: Structure-specific endonuclease subunit MUS81 (551 aa).

The segment covering 84 to 93 (HRTSGGDHAP) has biased composition (basic and acidic residues). The segment at 84–130 (HRTSGGDHAPDSPSGENSPAPQGRLAEVQDSSMPVPAQPKAGGSGSY) is disordered. Residues Ser95 and Ser101 each carry the phosphoserine modification. Residues 125-244 (GGSGSYWPAR…PGEETAVPGA (120 aa)) form an interaction with BLM region. The winged helix domain (WHD); critical for endonuclease activity stretch occupies residues 131 to 230 (WPARHSGARV…GLSLLNVGIG (100 aa)). Positions 270–372 (LLCVDIGETR…RRVYLVEEHG (103 aa)) constitute an ERCC4 domain. Catalysis depends on residues Asp274, Glu277, and Asp307. The Mg(2+) site is built by Asp274, Glu277, Asp307, Glu333, and Arg334. A helix-hairpin-helix (2HhH); involved in DNA recognition and bending region spans residues 471–545 (VREVFARQLM…LSRTLSQLYC (75 aa)).

The protein belongs to the XPF family. In terms of assembly, part of the heterodimeric DNA structure-specific endonuclease complex MUS81-EME1. Part of the heterodimeric DNA structure-specific endonuclease complex MUS81-EME2. Interacts with BLM; may stimulate the endonuclease activity of MUS81. Interacts with SLX4/BTBD12; this interaction is direct and links the MUS81-EME1 complex to SLX4, which may coordinate the action of the structure-specific endonuclease during DNA repair. Interacts with DCLRE1B/Apollo. Interacts with RECQL5; this interaction stimulates mitotic DNA synthesis. Interacts with CHEK2. It depends on Mg(2+) as a cofactor. In terms of tissue distribution, widely expressed.

It localises to the nucleus. The protein resides in the nucleolus. In terms of biological role, catalytic subunit of two functionally distinct, structure-specific, heterodimeric DNA endonucleases MUS81-EME1 and MUS81-EME2 that are involved in the maintenance of genome stability. Both endonucleases have essentially the same substrate specificity though MUS81-EME2 is more active than its MUS81-EME1 counterpart. Both cleave 3'-flaps and nicked Holliday junctions, and exhibit limited endonuclease activity with 5' flaps and nicked double-stranded DNAs. MUS81-EME2 which is active during the replication of DNA is more specifically involved in replication fork processing. Replication forks frequently encounter obstacles to their passage, including DNA base lesions, DNA interstrand cross-links, difficult-to-replicate sequences, transcription bubbles, or tightly bound proteins. One mechanism for the restart of a stalled replication fork involves nucleolytic cleavage mediated by the MUS81-EME2 endonuclease. By acting upon the stalled fork, MUS81-EME2 generates a DNA double-strand break (DSB) that can be repaired by homologous recombination, leading to the restoration of an active fork. MUS81-EME2 could also function in telomere maintenance. MUS81-EME1, on the other hand, is active later in the cell cycle and functions in the resolution of mitotic recombination intermediates including the Holliday junctions, the four-way DNA intermediates that form during homologous recombination. The protein is Structure-specific endonuclease subunit MUS81 of Homo sapiens (Human).